The sequence spans 304 residues: MEPLIGMGVLALIGVAATIAGASEDLESDVGSQSNPNSQVQLAPQMMFPHRIFNKAVSGEPPSNALMCSVGAAVATVLISEFTLSPLFALVLGALIAACVHGTFAVTSTMGRAASQSRFKQPVYLDMIRSHTPVIMGYSFITTFCILVVSYLMTVVLGHPFPLTMLAFIWGITVGAIGSSTGDVHYGAEREFQQFEFGSGLNASNSGNIVRYGESGVRNGYDNSWFCAKFGGPVTGMAFGMTVFLGSWVTTVFDPAVSISRGWISVVAGVIIVLILIFWNWKIEVKARNAYGPYKEDKTEEASA.

The next 6 membrane-spanning stretches (helical) occupy residues 3 to 23 (PLIG…AGAS), 86 to 106 (PLFA…TFAV), 131 to 151 (HTPV…VVSY), 152 to 172 (LMTV…IWGI), 233 to 253 (PVTG…TTVF), and 263 to 283 (WISV…NWKI).

The protein belongs to the MtrE family. In terms of assembly, the complex is composed of 8 subunits; MtrA, MtrB, MtrC, MtrD, MtrE, MtrF, MtrG and MtrH.

The protein resides in the cell membrane. The catalysed reaction is 5-methyl-5,6,7,8-tetrahydromethanopterin + coenzyme M + 2 Na(+)(in) = 5,6,7,8-tetrahydromethanopterin + methyl-coenzyme M + 2 Na(+)(out). Its pathway is one-carbon metabolism; methanogenesis from CO(2); methyl-coenzyme M from 5,10-methylene-5,6,7,8-tetrahydromethanopterin: step 2/2. Functionally, part of a complex that catalyzes the formation of methyl-coenzyme M and tetrahydromethanopterin from coenzyme M and methyl-tetrahydromethanopterin. This is an energy-conserving, sodium-ion translocating step. This is Tetrahydromethanopterin S-methyltransferase subunit E from Methanosarcina acetivorans (strain ATCC 35395 / DSM 2834 / JCM 12185 / C2A).